Reading from the N-terminus, the 165-residue chain is Heme oxygenase (165 aa).

The protein belongs to the heme oxygenase family.

It carries out the reaction heme b + 3 reduced [NADPH--hemoprotein reductase] + 3 O2 = biliverdin IXalpha + CO + Fe(2+) + 3 oxidized [NADPH--hemoprotein reductase] + 3 H2O + H(+). In terms of biological role, catalyzes the opening of the heme ring to form the open-chain tetrapyrrole biliverdin IX with the release of iron and carbon monoxide (CO). The protein is Heme oxygenase (bphO) of Xanthomonas campestris pv. campestris (strain 8004).